The chain runs to 88 residues: Small ribosomal subunit protein uS15 (88 aa).

The protein belongs to the universal ribosomal protein uS15 family. Part of the 30S ribosomal subunit. Forms a bridge to the 50S subunit in the 70S ribosome, contacting the 23S rRNA.

In terms of biological role, one of the primary rRNA binding proteins, it binds directly to 16S rRNA where it helps nucleate assembly of the platform of the 30S subunit by binding and bridging several RNA helices of the 16S rRNA. Forms an intersubunit bridge (bridge B4) with the 23S rRNA of the 50S subunit in the ribosome. The protein is Small ribosomal subunit protein uS15 of Trichlorobacter lovleyi (strain ATCC BAA-1151 / DSM 17278 / SZ) (Geobacter lovleyi).